A 314-amino-acid chain; its full sequence is Acetyl-coenzyme A carboxylase carboxyl transferase subunit beta (314 aa).

Residues 25 to 294 (VWTKCDSCSQ…PGTKPIVAEF (270 aa)) form the CoA carboxyltransferase N-terminal domain. Zn(2+)-binding residues include Cys29, Cys32, Cys48, and Cys51. The C4-type zinc-finger motif lies at 29–51 (CDSCSQVLYRAELERNLEVCPKC).

This sequence belongs to the AccD/PCCB family. In terms of assembly, acetyl-CoA carboxylase is a heterohexamer composed of biotin carboxyl carrier protein (AccB), biotin carboxylase (AccC) and two subunits each of ACCase subunit alpha (AccA) and ACCase subunit beta (AccD). Requires Zn(2+) as cofactor.

Its subcellular location is the cytoplasm. The enzyme catalyses N(6)-carboxybiotinyl-L-lysyl-[protein] + acetyl-CoA = N(6)-biotinyl-L-lysyl-[protein] + malonyl-CoA. It participates in lipid metabolism; malonyl-CoA biosynthesis; malonyl-CoA from acetyl-CoA: step 1/1. Its function is as follows. Component of the acetyl coenzyme A carboxylase (ACC) complex. Biotin carboxylase (BC) catalyzes the carboxylation of biotin on its carrier protein (BCCP) and then the CO(2) group is transferred by the transcarboxylase to acetyl-CoA to form malonyl-CoA. This is Acetyl-coenzyme A carboxylase carboxyl transferase subunit beta from Photorhabdus laumondii subsp. laumondii (strain DSM 15139 / CIP 105565 / TT01) (Photorhabdus luminescens subsp. laumondii).